Reading from the N-terminus, the 142-residue chain is Transcription antitermination protein NusB (142 aa).

The protein belongs to the NusB family.

In terms of biological role, involved in transcription antitermination. Required for transcription of ribosomal RNA (rRNA) genes. Binds specifically to the boxA antiterminator sequence of the ribosomal RNA (rrn) operons. The sequence is that of Transcription antitermination protein NusB from Anaeromyxobacter dehalogenans (strain 2CP-1 / ATCC BAA-258).